A 373-amino-acid chain; its full sequence is 3-dehydroquinate synthase (373 aa).

NAD(+) contacts are provided by residues 120 to 124, 144 to 145, lysine 157, lysine 166, and 184 to 187; these read GVVGD, TT, and FLKT. Zn(2+) contacts are provided by glutamate 199, histidine 262, and histidine 278.

It belongs to the sugar phosphate cyclases superfamily. Dehydroquinate synthase family. It depends on NAD(+) as a cofactor. The cofactor is Co(2+). Zn(2+) serves as cofactor.

Its subcellular location is the cytoplasm. It catalyses the reaction 7-phospho-2-dehydro-3-deoxy-D-arabino-heptonate = 3-dehydroquinate + phosphate. The protein operates within metabolic intermediate biosynthesis; chorismate biosynthesis; chorismate from D-erythrose 4-phosphate and phosphoenolpyruvate: step 2/7. Functionally, catalyzes the conversion of 3-deoxy-D-arabino-heptulosonate 7-phosphate (DAHP) to dehydroquinate (DHQ). In Clostridium tetani (strain Massachusetts / E88), this protein is 3-dehydroquinate synthase.